The primary structure comprises 366 residues: Rab9 effector protein with kelch motifs (366 aa).

Kelch repeat units follow at residues 49-95, 100-146, 151-200, 204-253, 254-303, and 343-366; these read KILI…FISA, NIWV…TSSA, KLYV…VLTA, KLFV…AWKS, YIYI…LLPW, and LCFI…TILQ.

Its function is as follows. Rab9 effector required for endosome to trans-Golgi network (TGN) transport. In Xenopus laevis (African clawed frog), this protein is Rab9 effector protein with kelch motifs (rabepk).